The chain runs to 252 residues: Vacuolar-sorting protein dot2 (252 aa).

The protein belongs to the SNF8 family. In terms of assembly, component of the endosomal sorting complex required for transport II (ESCRT-II).

The protein localises to the cytoplasm. It localises to the nucleus. It is found in the endosome membrane. In terms of biological role, component of the endosomal sorting complex required for transport II (ESCRT-II), which is required for multivesicular body (MVB) formation and sorting of endosomal cargo proteins into MVBs. The MVB pathway mediates delivery of transmembrane proteins into the lumen of the lysosome for degradation. The ESCRT-II complex is probably involved in the recruitment of the ESCRT-III complex. Negatively regulates meiotic spindle pole body maturation via indirect regulation of the pcp1 gene. Required for efficient entry into pre-meiotic S phase. The sequence is that of Vacuolar-sorting protein dot2 (dot2) from Schizosaccharomyces pombe (strain 972 / ATCC 24843) (Fission yeast).